Here is a 337-residue protein sequence, read N- to C-terminus: Eukaryotic translation initiation factor 3 subunit H (337 aa).

An MPN domain is found at valine 21–alanine 153.

Belongs to the eIF-3 subunit H family. As to quaternary structure, component of the eukaryotic translation initiation factor 3 (eIF-3) complex. The eIF-3 complex interacts with pix. Interacts with mxt.

It is found in the cytoplasm. In terms of biological role, component of the eukaryotic translation initiation factor 3 (eIF-3) complex, which is involved in protein synthesis of a specialized repertoire of mRNAs and, together with other initiation factors, stimulates binding of mRNA and methionyl-tRNAi to the 40S ribosome. The eIF-3 complex specifically targets and initiates translation of a subset of mRNAs involved in cell proliferation. In Drosophila pseudoobscura pseudoobscura (Fruit fly), this protein is Eukaryotic translation initiation factor 3 subunit H.